The primary structure comprises 150 residues: Large ribosomal subunit protein uL15 (150 aa).

The disordered stretch occupies residues 1 to 49 (MELHQLKSVSKSRNHKSKVVGRGHGSGLGKTSSRGQKGQKARKSGLTRL). The segment covering 10-21 (SKSRNHKSKVVG) has biased composition (basic residues).

Belongs to the universal ribosomal protein uL15 family. In terms of assembly, part of the 50S ribosomal subunit.

Functionally, binds to the 23S rRNA. This Mycoplasma genitalium (strain ATCC 33530 / DSM 19775 / NCTC 10195 / G37) (Mycoplasmoides genitalium) protein is Large ribosomal subunit protein uL15.